A 356-amino-acid polypeptide reads, in one-letter code: Biotin synthase (356 aa).

The region spanning 51–270 is the Radical SAM core domain; that stretch reads NKVQCNQLLN…IALARIMMPL (220 aa). [4Fe-4S] cluster is bound by residues cysteine 66, cysteine 70, and cysteine 73. Cysteine 110, cysteine 141, cysteine 201, and arginine 274 together coordinate [2Fe-2S] cluster. Residues 310-356 are disordered; the sequence is PGDNKDRSLFDRLGLEPRDDHGVHEHSSHSHTHDQGHDHGPHGHSHG. Residues 312–350 show a composition bias toward basic and acidic residues; that stretch reads DNKDRSLFDRLGLEPRDDHGVHEHSSHSHTHDQGHDHGP.

It belongs to the radical SAM superfamily. Biotin synthase family. As to quaternary structure, homodimer. [4Fe-4S] cluster is required as a cofactor. Requires [2Fe-2S] cluster as cofactor.

It catalyses the reaction (4R,5S)-dethiobiotin + (sulfur carrier)-SH + 2 reduced [2Fe-2S]-[ferredoxin] + 2 S-adenosyl-L-methionine = (sulfur carrier)-H + biotin + 2 5'-deoxyadenosine + 2 L-methionine + 2 oxidized [2Fe-2S]-[ferredoxin]. It participates in cofactor biosynthesis; biotin biosynthesis; biotin from 7,8-diaminononanoate: step 2/2. Its function is as follows. Catalyzes the conversion of dethiobiotin (DTB) to biotin by the insertion of a sulfur atom into dethiobiotin via a radical-based mechanism. The sequence is that of Biotin synthase from Rhodopseudomonas palustris (strain BisB18).